The primary structure comprises 837 residues: Dapper homolog 2 (837 aa).

Residues 65–113 are a coiled coil; that stretch reads ENVSKEELRLEATLSLLKQQLTRLRRQDVGLKTHLQQLDQQITELKLDV. Disordered regions lie at residues 189–265, 424–497, 512–564, 600–649, and 738–782; these read ADES…PKYQ, HGKH…DKSS, GSQR…KQSG, QQIP…HTQR, and EMSD…EDEG. 2 stretches are compositionally biased toward polar residues: residues 246–265 and 432–445; these read VKSS…PKYQ and LDLQ…NNTA. Basic and acidic residues-rich tracts occupy residues 456–466, 486–496, and 548–560; these read ASEKRSGHFPK, EGSRASCHDKS, and LSRE…RTDL. Residues 741–759 show a composition bias toward polar residues; sequence DYTTNRFGDSESSQGSQTA. Residues 768–782 show a composition bias toward acidic residues; it reads LDEEDLLEEEEEDEG. A PDZ-binding motif is present at residues 834-837; it reads MTLV.

The protein belongs to the dapper family. In terms of assembly, interacts with dvl2.

It is found in the cytoplasm. Its subcellular location is the late endosome. It localises to the nucleus. The protein resides in the cell membrane. In terms of biological role, involved in regulation of intracellular signaling pathways during development. Specifically thought to play a role in canonical and/or non-canonical Wnt signaling pathways through interaction with DSH (Dishevelled) family proteins. Positive regulator of the Wnt signaling pathway which acts downstream of wnt1 indicative for non-canonical Wnt signaling. Also negatively regulates the Nodal signaling pathway, possibly by promoting the lysosomal degradation of Nodal receptors. Required for convergent extension movements in gastrulation. This Danio rerio (Zebrafish) protein is Dapper homolog 2 (dact2).